The chain runs to 256 residues: 5-keto-4-deoxy-D-glucarate aldolase (256 aa).

Catalysis depends on H50, which acts as the Proton acceptor. Q151 is a binding site for substrate. E153 lines the Mg(2+) pocket. The substrate site is built by S178 and D179. D179 provides a ligand contact to Mg(2+).

This sequence belongs to the HpcH/HpaI aldolase family. KDGluc aldolase subfamily. In terms of assembly, homohexamer; trimer of dimers. Requires Mg(2+) as cofactor.

It catalyses the reaction 5-dehydro-4-deoxy-D-glucarate = 2-hydroxy-3-oxopropanoate + pyruvate. The enzyme catalyses 2-dehydro-3-deoxy-D-glucarate = 2-hydroxy-3-oxopropanoate + pyruvate. It participates in carbohydrate acid metabolism; galactarate degradation; D-glycerate from galactarate: step 2/3. Catalyzes the reversible retro-aldol cleavage of both 5-keto-4-deoxy-D-glucarate and 2-keto-3-deoxy-D-glucarate to pyruvate and tartronic semialdehyde. The sequence is that of 5-keto-4-deoxy-D-glucarate aldolase from Salmonella paratyphi C (strain RKS4594).